The following is a 374-amino-acid chain: Succinyl-diaminopimelate desuccinylase (374 aa).

His66 contributes to the Zn(2+) binding site. The active site involves Asp68. Zn(2+) is bound at residue Asp99. The active-site Proton acceptor is Glu133. Zn(2+) is bound by residues Glu134, Glu162, and His348.

The protein belongs to the peptidase M20A family. DapE subfamily. As to quaternary structure, homodimer. Requires Zn(2+) as cofactor. Co(2+) serves as cofactor.

It carries out the reaction N-succinyl-(2S,6S)-2,6-diaminopimelate + H2O = (2S,6S)-2,6-diaminopimelate + succinate. The protein operates within amino-acid biosynthesis; L-lysine biosynthesis via DAP pathway; LL-2,6-diaminopimelate from (S)-tetrahydrodipicolinate (succinylase route): step 3/3. Its function is as follows. Catalyzes the hydrolysis of N-succinyl-L,L-diaminopimelic acid (SDAP), forming succinate and LL-2,6-diaminopimelate (DAP), an intermediate involved in the bacterial biosynthesis of lysine and meso-diaminopimelic acid, an essential component of bacterial cell walls. The chain is Succinyl-diaminopimelate desuccinylase from Coxiella burnetii (strain RSA 331 / Henzerling II).